Consider the following 349-residue polypeptide: 4-hydroxy-2-oxovalerate aldolase 1 (349 aa).

The Pyruvate carboxyltransferase domain maps to 9–261 (ITVHDMTLRD…ATGVDVFRIQ (253 aa)). 17-18 (RD) lines the substrate pocket. D18 contacts Mn(2+). The active-site Proton acceptor is H21. S171 and H200 together coordinate substrate. Mn(2+) contacts are provided by H200 and H202. Y291 contributes to the substrate binding site.

It belongs to the 4-hydroxy-2-oxovalerate aldolase family.

It catalyses the reaction (S)-4-hydroxy-2-oxopentanoate = acetaldehyde + pyruvate. In Methylibium petroleiphilum (strain ATCC BAA-1232 / LMG 22953 / PM1), this protein is 4-hydroxy-2-oxovalerate aldolase 1.